The sequence spans 412 residues: DnaJ homolog subfamily A member 2 (412 aa).

The region spanning lysine 8–glycine 70 is the J domain. Lysine 39 carries the post-translational modification N6-acetyllysine. Phosphoserine is present on residues serine 78 and serine 123. Residues glycine 130–valine 214 form a CR-type zinc finger. Lysine 134 participates in a covalent cross-link: Glycyl lysine isopeptide (Lys-Gly) (interchain with G-Cter in SUMO2). 2 residues coordinate Zn(2+): cysteine 143 and cysteine 146. The CXXCXGXG motif repeat unit spans residues cysteine 143–glycine 150. Lysine 152 is modified (N6-acetyllysine). Cysteine 159, cysteine 162, cysteine 186, cysteine 189, cysteine 202, and cysteine 205 together coordinate Zn(2+). CXXCXGXG motif repeat units follow at residues cysteine 159–glycine 166, cysteine 186–glycine 193, and cysteine 202–lysine 209. Positions isoleucine 365–glutamine 412 are disordered. A Phosphotyrosine modification is found at tyrosine 391. A phosphoserine mark is found at serine 394 and serine 395. Cysteine 409 carries the cysteine methyl ester modification. A lipid anchor (S-farnesyl cysteine) is attached at cysteine 409. The propeptide at alanine 410–glutamine 412 is removed in mature form.

It is found in the membrane. In terms of biological role, co-chaperone of Hsc70. Stimulates ATP hydrolysis and the folding of unfolded proteins mediated by HSPA1A/B (in vitro). The sequence is that of DnaJ homolog subfamily A member 2 (DNAJA2) from Homo sapiens (Human).